Reading from the N-terminus, the 671-residue chain is Nucleolar GTP-binding protein 1 (671 aa).

Positions 169–350 constitute an OBG-type G domain; the sequence is RTVLICGYPN…VKNAACERLL (182 aa). Residues 175–182, 221–225, and 289–292 each bind GTP; these read GYPNVGKS, DTPGI, and NKTD. The tract at residues 516 to 671 is disordered; the sequence is VAQNRSTVPR…KRGKGKTDRR (156 aa). Residues 595-605 show a composition bias toward polar residues; that stretch reads RAMSISRSQSR. 2 stretches are compositionally biased toward basic residues: residues 631–640 and 654–671; these read NKSHKKRDKN and RPKH…TDRR.

The protein belongs to the TRAFAC class OBG-HflX-like GTPase superfamily. OBG GTPase family. NOG subfamily.

It localises to the nucleus. Its subcellular location is the nucleolus. In terms of biological role, involved in the biogenesis of the 60S ribosomal subunit. This chain is Nucleolar GTP-binding protein 1, found in Arabidopsis thaliana (Mouse-ear cress).